Reading from the N-terminus, the 219-residue chain is Large ribosomal subunit protein uL3 (219 aa).

2 disordered regions span residues 62-81 (DSRSSKYANKPAEGHAKKAG) and 136-156 (QARGPMSHGSHFHRAPGSVGM).

This sequence belongs to the universal ribosomal protein uL3 family. In terms of assembly, part of the 50S ribosomal subunit. Forms a cluster with proteins L14 and L19.

Functionally, one of the primary rRNA binding proteins, it binds directly near the 3'-end of the 23S rRNA, where it nucleates assembly of the 50S subunit. This Staphylococcus saprophyticus subsp. saprophyticus (strain ATCC 15305 / DSM 20229 / NCIMB 8711 / NCTC 7292 / S-41) protein is Large ribosomal subunit protein uL3.